Reading from the N-terminus, the 312-residue chain is Malate dehydrogenase (312 aa).

NAD(+) is bound by residues G7–G13 and D34. Positions 81 and 87 each coordinate substrate. NAD(+) contacts are provided by residues N94 and I117–N119. N119 and R153 together coordinate substrate. H177 serves as the catalytic Proton acceptor. Residue M227 participates in NAD(+) binding.

This sequence belongs to the LDH/MDH superfamily. MDH type 1 family. In terms of assembly, homodimer.

It catalyses the reaction (S)-malate + NAD(+) = oxaloacetate + NADH + H(+). Its function is as follows. Catalyzes the reversible oxidation of malate to oxaloacetate. This is Malate dehydrogenase from Photorhabdus laumondii subsp. laumondii (strain DSM 15139 / CIP 105565 / TT01) (Photorhabdus luminescens subsp. laumondii).